The following is a 476-amino-acid chain: Cysteine--tRNA ligase (476 aa).

Zn(2+) is bound at residue Cys-31. Residues 33 to 43 (PTVYNYAHIGN) carry the 'HIGH' region motif. Cys-211, His-236, and Glu-240 together coordinate Zn(2+). The short motif at 269-273 (KMSKS) is the 'KMSKS' region element. Lys-272 contacts ATP.

It belongs to the class-I aminoacyl-tRNA synthetase family. Monomer. Zn(2+) serves as cofactor.

It localises to the cytoplasm. It carries out the reaction tRNA(Cys) + L-cysteine + ATP = L-cysteinyl-tRNA(Cys) + AMP + diphosphate. The sequence is that of Cysteine--tRNA ligase from Xanthomonas axonopodis pv. citri (strain 306).